A 227-amino-acid chain; its full sequence is Cytochrome c oxidase subunit 2 (227 aa).

Topologically, residues 1–14 are mitochondrial intermembrane; sequence MAHAAQVGLQDATS. The chain crosses the membrane as a helical span at residues 15-45; that stretch reads PIMEELIIFHDHALMIIFLICFLVLYALFLT. The Mitochondrial matrix segment spans residues 46 to 59; that stretch reads LTTKLTSTNISDAQ. The helical transmembrane segment at 60–87 threads the bilayer; it reads EMETVWTILPAIILVLIALPSLRILYMT. The Mitochondrial intermembrane segment spans residues 88–227; that stretch reads DEINDPSFTI…IFEMGPVFTL (140 aa). Cu cation contacts are provided by H161, C196, E198, C200, H204, and M207. E198 contributes to the Mg(2+) binding site.

This sequence belongs to the cytochrome c oxidase subunit 2 family. In terms of assembly, component of the cytochrome c oxidase (complex IV, CIV), a multisubunit enzyme composed of 14 subunits. The complex is composed of a catalytic core of 3 subunits MT-CO1, MT-CO2 and MT-CO3, encoded in the mitochondrial DNA, and 11 supernumerary subunits COX4I, COX5A, COX5B, COX6A, COX6B, COX6C, COX7A, COX7B, COX7C, COX8 and NDUFA4, which are encoded in the nuclear genome. The complex exists as a monomer or a dimer and forms supercomplexes (SCs) in the inner mitochondrial membrane with NADH-ubiquinone oxidoreductase (complex I, CI) and ubiquinol-cytochrome c oxidoreductase (cytochrome b-c1 complex, complex III, CIII), resulting in different assemblies (supercomplex SCI(1)III(2)IV(1) and megacomplex MCI(2)III(2)IV(2)). Found in a complex with TMEM177, COA6, COX18, COX20, SCO1 and SCO2. Interacts with TMEM177 in a COX20-dependent manner. Interacts with COX20. Interacts with COX16. Cu cation serves as cofactor.

It localises to the mitochondrion inner membrane. It carries out the reaction 4 Fe(II)-[cytochrome c] + O2 + 8 H(+)(in) = 4 Fe(III)-[cytochrome c] + 2 H2O + 4 H(+)(out). Component of the cytochrome c oxidase, the last enzyme in the mitochondrial electron transport chain which drives oxidative phosphorylation. The respiratory chain contains 3 multisubunit complexes succinate dehydrogenase (complex II, CII), ubiquinol-cytochrome c oxidoreductase (cytochrome b-c1 complex, complex III, CIII) and cytochrome c oxidase (complex IV, CIV), that cooperate to transfer electrons derived from NADH and succinate to molecular oxygen, creating an electrochemical gradient over the inner membrane that drives transmembrane transport and the ATP synthase. Cytochrome c oxidase is the component of the respiratory chain that catalyzes the reduction of oxygen to water. Electrons originating from reduced cytochrome c in the intermembrane space (IMS) are transferred via the dinuclear copper A center (CU(A)) of subunit 2 and heme A of subunit 1 to the active site in subunit 1, a binuclear center (BNC) formed by heme A3 and copper B (CU(B)). The BNC reduces molecular oxygen to 2 water molecules using 4 electrons from cytochrome c in the IMS and 4 protons from the mitochondrial matrix. The protein is Cytochrome c oxidase subunit 2 (MT-CO2) of Gorilla gorilla beringei (Mountain gorilla).